The primary structure comprises 79 residues: Beta-defensin 130 (79 aa).

The first 22 residues, 1–22, serve as a signal peptide directing secretion; the sequence is MKLHSLISVLLLFVTLIPKGKT. Intrachain disulfides connect cysteine 38–cysteine 53 and cysteine 43–cysteine 60.

This sequence belongs to the beta-defensin family.

The protein resides in the secreted. In terms of biological role, antimicrobial host-defense peptide. The sequence is that of Beta-defensin 130 from Pan troglodytes (Chimpanzee).